We begin with the raw amino-acid sequence, 70 residues long: Small ribosomal subunit protein bS21 (70 aa).

The protein belongs to the bacterial ribosomal protein bS21 family.

The polypeptide is Small ribosomal subunit protein bS21 (Sulfurimonas denitrificans (strain ATCC 33889 / DSM 1251) (Thiomicrospira denitrificans (strain ATCC 33889 / DSM 1251))).